A 146-amino-acid chain; its full sequence is Ninjurin-1 (146 aa).

The segment at 1–33 (MASEAMELNGGVNRRDDPGARPQQGRMSRNTPL) is disordered. At 1-75 (MASEAMELNG…ELGPSFSFYI (75 aa)) the chain is on the extracellular side. Positions 37–66 (HYANKKSAAESMLDIALLMANASQLKTVLE) are required to induce plasma membrane rupture. The helix alpha1 stretch occupies residues 41 to 52 (KKSAAESMLDIA). The tract at residues 55-71 (MANASQLKTVLELGPSF) is helix alpha2. N-linked (GlcNAc...) asparagine glycosylation is present at Asn-57. The helical transmembrane segment at 76–100 (PLITLISISLTLQIIVGILLIFIVK) threads the bilayer. Topologically, residues 101–110 (WNLNDSSKHY) are cytoplasmic. Residues 111-135 (ILNLLENIVTALVFIVVVVNVFITA) traverse the membrane as a helical segment. The Extracellular segment spans residues 136-146 (FGVQRPDDKTS).

This sequence belongs to the ninjurin family. As to quaternary structure, homooligomer; in response to death stimuli, homooligomerizes into long, highly branched filaments and large, ring-shaped structures in the membrane. In terms of assembly, homodimer; in absence of death stimuli, forms an inactive homodimer. Homooligomer; in response to death stimuli, homooligomerizes into long, highly branched filaments and large, ring-shaped structures in the membrane.

The protein localises to the cell membrane. Its subcellular location is the synaptic cell membrane. In normal conditions, NINJ1 is inactivated. In response to death stimuli, homooligomerizes and disrupts membrane integrity by introducing the hydrophilic faces of alpha1 and alpha2 helices into the hydrophobic membrane. Homooligomerization and ability to mediate plasma membrane rupture is inhibited by glycine; it is unclear whether glycine directly or indirectly inhibits homooligomerization. Its activity is regulated as follows. In response to death stimuli, homooligomerizes and disrupts membrane integrity by introducing the hydrophilic faces of alpha1 and alpha2 helices into the hydrophobic membrane. Homooligomerization and ability to mediate plasma membrane rupture is inhibited by glycine; it is unclear whether glycine directly or indirectly inhibits homooligomerization. In normal conditions, NINJ1 is autoinhibited via formation of a homodimer: in the inactive homodimer, the alpha1 and alpha2 helices (residues 41-71) form a single transmembrane region without a kink, in which hydrophilic faces of alpha1 and alpha2 helices are sequestered. Functionally, effector of various programmed cell death, such as pyroptosis and necroptosis, which mediates plasma membrane rupture (cytolysis). Oligomerizes in response to death stimuli and forms ring-like structures on the plasma membrane: acts by cutting and shedding membrane disks, like a cookie cutter, leading to membrane damage and loss that cannot be repaired by the cell. Plasma membrane rupture leads to release intracellular molecules named damage-associated molecular patterns (DAMPs) that propagate the inflammatory response. Mechanistically, mediates plasma membrane rupture by introducing hydrophilic faces of 2 alpha helices into the hydrophobic membrane. Induces plasma membrane rupture downstream of Gasdermin (GSDMA, GSDMB, GSDMC, GSDMD, or GSDME) or MLKL during pyroptosis or necroptosis, respectively. Also acts as an effector of PANoptosis and ferroptosis. Induces plasma membrane rupture in response to cell swelling caused by osmotic stress. Acts as a regulator of Toll-like receptor 4 (TLR4) signaling triggered by lipopolysaccharide (LPS) during systemic inflammation; directly binds LPS. Involved in leukocyte migration during inflammation by promoting transendothelial migration of macrophages via homotypic binding. Promotes the migration of monocytes across the brain endothelium to central nervous system inflammatory lesions. Also acts as a homophilic transmembrane adhesion molecule involved in various processes such as axonal growth, cell chemotaxis and angiogenesis. Promotes cell adhesion by mediating homophilic interactions via its extracellular N-terminal adhesion motif (N-NAM). Also involved in striated muscle growth and differentiation. This Danio rerio (Zebrafish) protein is Ninjurin-1.